A 325-amino-acid chain; its full sequence is tRNA(Ile)-lysidine synthase (325 aa).

Residue 34-39 (SGGADS) coordinates ATP.

This sequence belongs to the tRNA(Ile)-lysidine synthase family.

It localises to the cytoplasm. It carries out the reaction cytidine(34) in tRNA(Ile2) + L-lysine + ATP = lysidine(34) in tRNA(Ile2) + AMP + diphosphate + H(+). Its function is as follows. Ligates lysine onto the cytidine present at position 34 of the AUA codon-specific tRNA(Ile) that contains the anticodon CAU, in an ATP-dependent manner. Cytidine is converted to lysidine, thus changing the amino acid specificity of the tRNA from methionine to isoleucine. This Rhodococcus opacus (strain B4) protein is tRNA(Ile)-lysidine synthase.